A 177-amino-acid polypeptide reads, in one-letter code: Gamma-crystallin M1-2 (177 aa).

Beta/gamma crystallin 'Greek key' domains follow at residues 2–40 (GKII…RVEN) and 41–83 (GCWM…RLLS). Positions 84–90 (QNLGIGT) are connecting peptide. Beta/gamma crystallin 'Greek key' domains follow at residues 91 to 131 (NKLR…NVLD) and 132 to 174 (GYWI…RRVI).

This sequence belongs to the beta/gamma-crystallin family. As to quaternary structure, monomer.

Functionally, crystallins are the dominant structural components of the vertebrate eye lens. This chain is Gamma-crystallin M1-2, found in Aquarana catesbeiana (American bullfrog).